The following is a 353-amino-acid chain: Photosystem II D2 protein (353 aa).

At Thr-2 the chain carries N-acetylthreonine. Thr-2 bears the Phosphothreonine mark. A helical transmembrane segment spans residues 41 to 61 (CAYFALGGWFTGTTFVTSWYT). His-118 is a chlorophyll a binding site. A helical transmembrane segment spans residues 125-141 (GFMLRQFELARSVQLRP). Residues Gln-130 and Asn-143 each coordinate pheophytin a. The chain crosses the membrane as a helical span at residues 153 to 166 (VFVSVFLIYPLGQS). Residue His-198 participates in chlorophyll a binding. A helical membrane pass occupies residues 208–228 (AALLCAIHGATVENTLFEDGD). 2 residues coordinate a plastoquinone: His-215 and Phe-262. His-215 provides a ligand contact to Fe cation. Fe cation is bound at residue His-269. A helical membrane pass occupies residues 279 to 295 (GLWMSALGVVGLALNLR).

This sequence belongs to the reaction center PufL/M/PsbA/D family. PSII is composed of 1 copy each of membrane proteins PsbA, PsbB, PsbC, PsbD, PsbE, PsbF, PsbH, PsbI, PsbJ, PsbK, PsbL, PsbM, PsbT, PsbX, PsbY, PsbZ, Psb30/Ycf12, at least 3 peripheral proteins of the oxygen-evolving complex and a large number of cofactors. It forms dimeric complexes. Interacts with PAM68. The D1/D2 heterodimer binds P680, chlorophylls that are the primary electron donor of PSII, and subsequent electron acceptors. It shares a non-heme iron and each subunit binds pheophytin, quinone, additional chlorophylls, carotenoids and lipids. There is also a Cl(-1) ion associated with D1 and D2, which is required for oxygen evolution. The PSII complex binds additional chlorophylls, carotenoids and specific lipids. serves as cofactor. In terms of processing, phosphorylation occurs in normal plant growth light conditions. Rapid dephosphorylation occurs during heat shock.

It is found in the plastid. It localises to the chloroplast thylakoid membrane. It carries out the reaction 2 a plastoquinone + 4 hnu + 2 H2O = 2 a plastoquinol + O2. Functionally, photosystem II (PSII) is a light-driven water:plastoquinone oxidoreductase that uses light energy to abstract electrons from H(2)O, generating O(2) and a proton gradient subsequently used for ATP formation. It consists of a core antenna complex that captures photons, and an electron transfer chain that converts photonic excitation into a charge separation. The D1/D2 (PsbA/PsbD) reaction center heterodimer binds P680, the primary electron donor of PSII as well as several subsequent electron acceptors. D2 is needed for assembly of a stable PSII complex. In Arabidopsis thaliana (Mouse-ear cress), this protein is Photosystem II D2 protein.